A 117-amino-acid chain; its full sequence is Large ribosomal subunit protein bL20c (117 aa).

This sequence belongs to the bacterial ribosomal protein bL20 family.

Its subcellular location is the plastid. It is found in the chloroplast. Its function is as follows. Binds directly to 23S ribosomal RNA and is necessary for the in vitro assembly process of the 50S ribosomal subunit. It is not involved in the protein synthesizing functions of that subunit. The sequence is that of Large ribosomal subunit protein bL20c from Barbarea verna (Land cress).